Consider the following 147-residue polypeptide: Sentan (147 aa).

The segment at 1-32 is disordered; that stretch reads MGGCMHSTQDKSLHLEGDPNPSAAPTSTCAPR. Residues 8-17 are compositionally biased toward basic and acidic residues; the sequence is TQDKSLHLEG.

Belongs to the S-100 family.

The protein localises to the cell projection. The protein resides in the cilium. May be a component of the linker structure that bridges the ciliary membrane and peripheral singlet microtubules. This chain is Sentan (SNTN), found in Homo sapiens (Human).